The following is a 477-amino-acid chain: Glycogen synthase (477 aa).

Residue lysine 15 coordinates ADP-alpha-D-glucose.

The protein belongs to the glycosyltransferase 1 family. Bacterial/plant glycogen synthase subfamily.

The enzyme catalyses [(1-&gt;4)-alpha-D-glucosyl](n) + ADP-alpha-D-glucose = [(1-&gt;4)-alpha-D-glucosyl](n+1) + ADP + H(+). It participates in glycan biosynthesis; glycogen biosynthesis. In terms of biological role, synthesizes alpha-1,4-glucan chains using ADP-glucose. The chain is Glycogen synthase from Shigella flexneri serotype 5b (strain 8401).